The chain runs to 281 residues: Formamidopyrimidine-DNA glycosylase (281 aa).

The active-site Schiff-base intermediate with DNA is the Pro-2. Catalysis depends on Glu-3, which acts as the Proton donor. Lys-58 functions as the Proton donor; for beta-elimination activity in the catalytic mechanism. Residues His-100, Arg-119, and Arg-160 each contribute to the DNA site. The segment at 245–281 (RVYGREGAPCPTPGCTGTVQRIVQSGRSSFFCPLCQQ) adopts an FPG-type zinc-finger fold. Residue Arg-271 is the Proton donor; for delta-elimination activity of the active site.

This sequence belongs to the FPG family. As to quaternary structure, monomer. Zn(2+) serves as cofactor.

The catalysed reaction is Hydrolysis of DNA containing ring-opened 7-methylguanine residues, releasing 2,6-diamino-4-hydroxy-5-(N-methyl)formamidopyrimidine.. It catalyses the reaction 2'-deoxyribonucleotide-(2'-deoxyribose 5'-phosphate)-2'-deoxyribonucleotide-DNA = a 3'-end 2'-deoxyribonucleotide-(2,3-dehydro-2,3-deoxyribose 5'-phosphate)-DNA + a 5'-end 5'-phospho-2'-deoxyribonucleoside-DNA + H(+). In terms of biological role, involved in base excision repair of DNA damaged by oxidation or by mutagenic agents. Acts as a DNA glycosylase that recognizes and removes damaged bases. Has a preference for oxidized purines, such as 7,8-dihydro-8-oxoguanine (8-oxoG). Has AP (apurinic/apyrimidinic) lyase activity and introduces nicks in the DNA strand. Cleaves the DNA backbone by beta-delta elimination to generate a single-strand break at the site of the removed base with both 3'- and 5'-phosphates. The sequence is that of Formamidopyrimidine-DNA glycosylase from Paracoccus denitrificans (strain Pd 1222).